A 954-amino-acid polypeptide reads, in one-letter code: Endogenous retrovirus group K member 25 Pol protein (954 aa).

The region spanning 57-245 (LEKGHIEPSF…TPFHYLGMQI (189 aa)) is the Reverse transcriptase domain. The short motif at 161–164 (LPQG) is the LPQG element. The YXDD motif lies at 195 to 198 (YIDD). In terms of domain architecture, RNase H type-1 spans 460 to 588 (LENALTVFTD…ADLLVSSALI (129 aa)). The Mg(2+) site is built by aspartate 469, glutamate 497, aspartate 515, and aspartate 580. The Integrase-type zinc-finger motif lies at 585 to 626 (SALIKAQELHALTHVNAAGLKNKFDVTWKLAKDIVQHCTQCQ). Histidine 594, histidine 598, cysteine 622, and cysteine 625 together coordinate Zn(2+). An Integrase catalytic domain is found at 640–801 (RGLCPNALWQ…TSAEQHLTGK (162 aa)). A DNA-binding region (integrase-type) is located at residues 809–857 (KLIWWKDNKNKTWEIGKVITWGRGFACVSPGENQLPVWIPTRHLKFYNE). Residues 862 to 888 (AKKSTSAETETPQSSTVDSQDEQNGDV) form a disordered region. Residues 867-879 (SAETETPQSSTVD) show a composition bias toward polar residues.

Belongs to the beta type-B retroviral polymerase family. HERV class-II K(HML-2) pol subfamily.

The catalysed reaction is DNA(n) + a 2'-deoxyribonucleoside 5'-triphosphate = DNA(n+1) + diphosphate. It carries out the reaction Endonucleolytic cleavage to 5'-phosphomonoester.. In terms of biological role, early post-infection, the reverse transcriptase converts the viral RNA genome into double-stranded viral DNA. The RNase H domain of the reverse transcriptase performs two functions. It degrades the RNA template and specifically removes the RNA primer from the RNA/DNA hybrid. Following nuclear import, the integrase catalyzes the insertion of the linear, double-stranded viral DNA into the host cell chromosome. Endogenous Pol proteins may have kept, lost or modified their original function during evolution. In Homo sapiens (Human), this protein is Endogenous retrovirus group K member 25 Pol protein (ERVK-25).